A 426-amino-acid polypeptide reads, in one-letter code: Glucose-1-phosphate adenylyltransferase (426 aa).

Alpha-D-glucose 1-phosphate-binding positions include Gly-165, 180–181 (EK), and Ser-191.

It belongs to the bacterial/plant glucose-1-phosphate adenylyltransferase family. As to quaternary structure, homotetramer.

The catalysed reaction is alpha-D-glucose 1-phosphate + ATP + H(+) = ADP-alpha-D-glucose + diphosphate. It functions in the pathway glycan biosynthesis; glycogen biosynthesis. In terms of biological role, involved in the biosynthesis of ADP-glucose, a building block required for the elongation reactions to produce glycogen. Catalyzes the reaction between ATP and alpha-D-glucose 1-phosphate (G1P) to produce pyrophosphate and ADP-Glc. The sequence is that of Glucose-1-phosphate adenylyltransferase from Ruminiclostridium cellulolyticum (strain ATCC 35319 / DSM 5812 / JCM 6584 / H10) (Clostridium cellulolyticum).